The chain runs to 128 residues: MLPFYFLSVATNAAIGFILTVLDSQEESAHDCPFLYDATFSLVLALLSGIAAVCKCVNPIGAQLPVLGDLIPTLAGGTGCALFLHRYCVALSKPSPIPRTLVQYAKPLGLFSLAASILHLLFAPTLFL.

The next 4 helical transmembrane spans lie at 2–22 (LPFY…LTVL), 34–54 (FLYD…AAVC), 64–84 (LPVL…ALFL), and 108–128 (LGLF…TLFL).

The protein localises to the cell membrane. This is an uncharacterized protein from Treponema pallidum (strain Nichols).